The chain runs to 341 residues: Cysteine-rich with EGF-like domain protein 2 (341 aa).

Residues 1–24 form the signal peptide; that stretch reads MLLSCSIFRLFCIILLLQLGSIYT. Residues 136 to 178 enclose the EGF-like domain; sequence DCNTCIGGADRPCHGNGKCDGDGTRAGNGKCSCDEGYDGEFCL. Disulfide bonds link Cys140/Cys154, Cys148/Cys166, and Cys168/Cys177. Asn190 carries N-linked (GlcNAc...) asparagine glycosylation. 2 FU repeats span residues 193 to 248 and 254 to 308; these read FFLC…DQYC and SFSC…NQHC. The region spanning 291-317 is the EGF-like 2; calcium-binding; truncated domain; it reads DIDECTEDPASCSDNQHCLNTDGSFSC.

Belongs to the CRELD family.

The protein localises to the secreted. Its subcellular location is the endoplasmic reticulum. Possible role in neuronal acetylcholine receptor transport. This Danio rerio (Zebrafish) protein is Cysteine-rich with EGF-like domain protein 2 (creld2).